Reading from the N-terminus, the 37-residue chain is Large ribosomal subunit protein bL36 (37 aa).

Belongs to the bacterial ribosomal protein bL36 family.

The chain is Large ribosomal subunit protein bL36 from Marinobacter nauticus (strain ATCC 700491 / DSM 11845 / VT8) (Marinobacter aquaeolei).